Consider the following 488-residue polypeptide: Rhamnulokinase (488 aa).

11–15 (ASSGR) lines the ATP pocket. Substrate-binding positions include Ala79 and 234-236 (HDT). Asp235 functions as the Proton acceptor in the catalytic mechanism. Thr257 contributes to the ATP binding site. Asn294 is a binding site for substrate. Residues Gln302 and Gly401 each contribute to the ATP site.

The protein belongs to the rhamnulokinase family. Mg(2+) serves as cofactor.

It catalyses the reaction L-rhamnulose + ATP = L-rhamnulose 1-phosphate + ADP + H(+). Its pathway is carbohydrate degradation; L-rhamnose degradation; glycerone phosphate from L-rhamnose: step 2/3. Functionally, involved in the catabolism of L-rhamnose (6-deoxy-L-mannose). Catalyzes the transfer of the gamma-phosphate group from ATP to the 1-hydroxyl group of L-rhamnulose to yield L-rhamnulose 1-phosphate. This chain is Rhamnulokinase, found in Lactiplantibacillus plantarum (strain ATCC BAA-793 / NCIMB 8826 / WCFS1) (Lactobacillus plantarum).